The primary structure comprises 423 residues: Vitamin D3 receptor (423 aa).

Residues cysteine 24, cysteine 27, cysteine 41, cysteine 44, cysteine 60, cysteine 66, cysteine 76, and cysteine 79 each coordinate Zn(2+). 2 NR C4-type zinc fingers span residues 24 to 44 (CGVCGDRATGFHFNAMTCEGC) and 60 to 84 (CPFNGDCRITKDNRRHCQACRLKRC). The nuclear receptor DNA-binding region spans 24–89 (CGVCGDRATG…RLKRCVDIGM (66 aa)). The tract at residues 97-126 (DEEVQRKREMIMKRKEEEALKDSLRPKLSE) is hinge. The 293-residue stretch at 127–419 (EQQHIIAILL…LTPLVLEVFG (293 aa)) folds into the NR LBD domain. Residue tyrosine 143 coordinates calcitriol. The tract at residues 159–180 (MDGSTGSYSPRPTLSFSGNSSS) is disordered. A compositionally biased stretch (low complexity) spans 171–180 (TLSFSGNSSS). Serine 233 contacts calcitriol. The interaction with coactivator LXXLL motif stretch occupies residues 242-260 (KMIPGFRDLTSDDQIVLLK). Calcitriol is bound by residues arginine 270, serine 274, histidine 301, and histidine 393. A 9aaTAD motif is present at residues 412-420 (PLVLEVFGN).

The protein belongs to the nuclear hormone receptor family. NR1 subfamily. In terms of assembly, homodimer in the absence of bound vitamin D3. Heterodimer with RXRA after vitamin D3 binding. Interacts with MED1 and NCOA6. Interacts with MED1, NCOA1, NCOA2, NCOA3 and NCOA6 coactivators, leading to a strong increase of transcription of target genes. Interacts with the corepressor NCOR1. Interacts with SNW1. Interacts with IRX4, the interaction does not affect its transactivation activity. Interacts with CRY1. Interacts with CRY2 in a ligand-dependent manner. Post-translationally, ubiquitinated by UBR5, leading to its degradation: UBR5 specifically recognizes and binds ligand-bound VDR when it is not associated with coactivators (NCOAs). In presence of NCOAs, the UBR5-degron is not accessible, preventing its ubiquitination and degradation. Detected in intestine and kidney.

The protein localises to the nucleus. Its subcellular location is the cytoplasm. In terms of biological role, nuclear receptor for calcitriol, the active form of vitamin D3 which mediates the action of this vitamin on cells. Enters the nucleus upon vitamin D3 binding where it forms heterodimers with the retinoid X receptor/RXR. The VDR-RXR heterodimers bind to specific response elements on DNA and activate the transcription of vitamin D3-responsive target genes. Plays a central role in calcium homeostasis. Also functions as a receptor for the secondary bile acid lithocholic acid (LCA) and its metabolites. This is Vitamin D3 receptor (Vdr) from Rattus norvegicus (Rat).